Here is a 323-residue protein sequence, read N- to C-terminus: Beta-ketoacyl-[acyl-carrier-protein] synthase III (323 aa).

Catalysis depends on residues C112 and H248. The segment at 249 to 253 (QANRR) is ACP-binding. Residue N278 is part of the active site.

Belongs to the thiolase-like superfamily. FabH family. As to quaternary structure, homodimer.

It localises to the cytoplasm. The enzyme catalyses malonyl-[ACP] + acetyl-CoA + H(+) = 3-oxobutanoyl-[ACP] + CO2 + CoA. It functions in the pathway lipid metabolism; fatty acid biosynthesis. Functionally, catalyzes the condensation reaction of fatty acid synthesis by the addition to an acyl acceptor of two carbons from malonyl-ACP. Catalyzes the first condensation reaction which initiates fatty acid synthesis and may therefore play a role in governing the total rate of fatty acid production. Possesses both acetoacetyl-ACP synthase and acetyl transacylase activities. Its substrate specificity determines the biosynthesis of branched-chain and/or straight-chain of fatty acids. The chain is Beta-ketoacyl-[acyl-carrier-protein] synthase III from Streptococcus agalactiae serotype Ia (strain ATCC 27591 / A909 / CDC SS700).